Reading from the N-terminus, the 1233-residue chain is Capping protein-inhibiting regulator of actin dynamics (1233 aa).

A phosphoserine mark is found at S7, S28, and S132. Disordered stretches follow at residues 92 to 136 (AENK…SAGT), 157 to 224 (AKHK…RRRQ), and 269 to 527 (LLEE…WQEV). The span at 157–176 (AKHKLAVKPKKQRVSKKHRR) shows a compositional bias: basic residues. 4 stretches are compositionally biased toward basic and acidic residues: residues 200 to 211 (PGEDKPTWHEEE), 282 to 293 (EAERAPREEQQR), 302 to 322 (DAERREREERERLEAEEERRR), and 329 to 362 (AEERRRLEEDARLEERRRQEEEEGRCAEELKRQE). Residues 321–472 (RRLQAQAQAE…EQQGRSGDFQ (152 aa)) form a required for interaction with actin-capping proteins region. Composition is skewed to acidic residues over residues 363–376 (EEEAEGWEELEQQE) and 397–407 (EEEDLGEEEEE). Phosphoserine is present on S420. Composition is skewed to basic and acidic residues over residues 432-447 (DQERLKPEGQREHSEE) and 505-527 (VERKEAAALEQGRKVEELRWQEV). Residue S556 is modified to Phosphoserine. T559 carries the post-translational modification Phosphothreonine. 4 disordered regions span residues 560–586 (PAKDTGLTAAPQEPKAPKASPVQHALP), 629–788 (HAEA…TTEG), 815–1082 (EFTT…TEKV), and 1097–1186 (QKGF…ISDS). A compositionally biased stretch (basic and acidic residues) spans 677 to 707 (KNAESDPRSSERDQLRPGDESTPRGRCDSRG). A compositionally biased stretch (polar residues) spans 732–742 (GTETSKQSTEA). Residues 768–783 (ELGKGPEKSEMHREPA) are compositionally biased toward basic and acidic residues. 2 stretches are compositionally biased toward polar residues: residues 815–825 (EFTTSSDSETA) and 852–863 (TNYSLRFNCDQQ). A compositionally biased stretch (low complexity) spans 876–889 (GDSADAGPPAAGSA). The span at 908–921 (QERKQAPSTRRDSA) shows a compositional bias: basic and acidic residues. Low complexity predominate over residues 956–967 (PLAQKPALAPKP). T971 carries the post-translational modification Phosphothreonine. A phosphoserine mark is found at S975 and S1017. The segment covering 994–1040 (GRPDPEPSEPSKEDQESSDRRPPSPPGPEERKGQKRDEEEEATERKP) has biased composition (basic and acidic residues). Residues 1047 to 1057 (ATQQEKPSQTP) show a composition bias toward polar residues. Composition is skewed to basic and acidic residues over residues 1059–1082 (AGRKEKPMLQSRHSLDGSKLTEKV) and 1099–1124 (GFREQQATREERKQAREAKQAEKLSK). The segment covering 1127–1139 (VSVSVQPGSSSVS) has biased composition (low complexity). A compositionally biased stretch (basic and acidic residues) spans 1151–1170 (PEEKRPETAVSRLERREQLK). Residues 1174-1183 (TLPTSVTVEI) show a composition bias toward polar residues.

In terms of assembly, directly interacts with actin-capping proteins CAPZA1, CAPZA2 and CAPZB; this interaction decreases the binding of capping proteins to actin. Expressed in intestinal epithelial cells (at protein level).

The protein resides in the cytoplasm. Its subcellular location is the cytosol. Its function is as follows. Involved in epithelial cell integrity by acting on the maintenance of the actin cytoskeleton. Positively regulates the actin polymerization, by inhibiting the interaction of actin-capping proteins with actin. This Homo sapiens (Human) protein is Capping protein-inhibiting regulator of actin dynamics.